A 184-amino-acid chain; its full sequence is ATP-dependent protease subunit HslV (184 aa).

T12 is a catalytic residue. Na(+) contacts are provided by A166, C169, and T172.

It belongs to the peptidase T1B family. HslV subfamily. A double ring-shaped homohexamer of HslV is capped on each side by a ring-shaped HslU homohexamer. The assembly of the HslU/HslV complex is dependent on binding of ATP.

Its subcellular location is the cytoplasm. The enzyme catalyses ATP-dependent cleavage of peptide bonds with broad specificity.. Its activity is regulated as follows. Allosterically activated by HslU binding. Protease subunit of a proteasome-like degradation complex believed to be a general protein degrading machinery. In Brucella ovis (strain ATCC 25840 / 63/290 / NCTC 10512), this protein is ATP-dependent protease subunit HslV.